Reading from the N-terminus, the 145-residue chain is Protein AggB (145 aa).

The N-terminal stretch at 1 to 24 is a signal peptide; the sequence is MLKKSILPMSCGVLVMVMSGLLDA.

To E.coli AfaD.

The polypeptide is Protein AggB (aggB) (Escherichia coli).